The sequence spans 279 residues: Peptide deformylase 1B, chloroplastic (279 aa).

The Fe cation site is built by Cys177 and His219. Residue Glu220 is part of the active site. Residue His223 coordinates Fe cation.

This sequence belongs to the polypeptide deformylase family. Requires Fe(2+) as cofactor.

The protein localises to the plastid. The protein resides in the chloroplast. It catalyses the reaction N-terminal N-formyl-L-methionyl-[peptide] + H2O = N-terminal L-methionyl-[peptide] + formate. In terms of biological role, removes the formyl group from the N-terminal Met of newly synthesized proteins. In Solanum lycopersicum (Tomato), this protein is Peptide deformylase 1B, chloroplastic (PDF1B).